Reading from the N-terminus, the 216-residue chain is Nucleoside triphosphate pyrophosphatase (216 aa).

Asp-82 acts as the Proton acceptor in catalysis.

Belongs to the Maf family. A divalent metal cation is required as a cofactor.

It localises to the cytoplasm. It catalyses the reaction a ribonucleoside 5'-triphosphate + H2O = a ribonucleoside 5'-phosphate + diphosphate + H(+). The enzyme catalyses a 2'-deoxyribonucleoside 5'-triphosphate + H2O = a 2'-deoxyribonucleoside 5'-phosphate + diphosphate + H(+). Functionally, nucleoside triphosphate pyrophosphatase. May have a dual role in cell division arrest and in preventing the incorporation of modified nucleotides into cellular nucleic acids. This chain is Nucleoside triphosphate pyrophosphatase, found in Mycobacterium ulcerans (strain Agy99).